The following is a 263-amino-acid chain: Coiled-coil domain-containing protein 172 (263 aa).

A coiled-coil region spans residues 13–191 (TEHQAEESRR…LKVLKDEETE (179 aa)).

It belongs to the CCDC172 family. May interact with TEKT2. As to expression, detected in spermatozoa (at protein level). Predominantly expressed in testis and in spermatozoa from the caput and corpus epididymis.

It localises to the cytoplasm. The protein localises to the cell projection. It is found in the cilium. This Rattus norvegicus (Rat) protein is Coiled-coil domain-containing protein 172 (Ccdc172).